We begin with the raw amino-acid sequence, 311 residues long: Methionyl-tRNA formyltransferase (311 aa).

(6S)-5,6,7,8-tetrahydrofolate is bound at residue Ser110–Pro113.

The protein belongs to the Fmt family.

The enzyme catalyses L-methionyl-tRNA(fMet) + (6R)-10-formyltetrahydrofolate = N-formyl-L-methionyl-tRNA(fMet) + (6S)-5,6,7,8-tetrahydrofolate + H(+). In terms of biological role, attaches a formyl group to the free amino group of methionyl-tRNA(fMet). The formyl group appears to play a dual role in the initiator identity of N-formylmethionyl-tRNA by promoting its recognition by IF2 and preventing the misappropriation of this tRNA by the elongation apparatus. This is Methionyl-tRNA formyltransferase from Streptococcus mutans serotype c (strain ATCC 700610 / UA159).